The following is a 1132-amino-acid chain: Serine/threonine-protein kinase spk-1 (1132 aa).

A helical membrane pass occupies residues Gly75–Phe95. Disordered regions lie at residues Asn240–Asp388 and Asn419–Gly481. Acidic residues-rich tracts occupy residues Ser281–Glu290 and Asp311–Glu336. The span at Asp362 to Thr372 shows a compositional bias: low complexity. Positions Pro373–Asp388 are enriched in acidic residues. Residues Lys421–Asp433 show a composition bias toward basic and acidic residues. Positions Val434–Ser443 are enriched in low complexity. In terms of domain architecture, Protein kinase spans Tyr495–Leu1044. ATP is bound by residues Leu501–Val509 and Lys524. Asp628 functions as the Proton acceptor in the catalytic mechanism. Residues Gln1066–Val1121 form a disordered region. Low complexity predominate over residues Ser1084–Ala1096.

Belongs to the protein kinase superfamily. Ser/Thr protein kinase family.

The protein localises to the membrane. It carries out the reaction L-seryl-[protein] + ATP = O-phospho-L-seryl-[protein] + ADP + H(+). The catalysed reaction is L-threonyl-[protein] + ATP = O-phospho-L-threonyl-[protein] + ADP + H(+). Functionally, required for embryogenesis and germline development in both adult hermaphrodites and males. SR-protein kinase (SRPK) that binds directly to and phosphorylates RS domains. The sequence is that of Serine/threonine-protein kinase spk-1 (spk-1) from Caenorhabditis briggsae.